The chain runs to 1183 residues: Polyphosphatidylinositol phosphatase INP52 (1183 aa).

Residues 133–153 (PPSISTHSSRSSLRSSSSRSL) show a composition bias toward low complexity. Residues 133–161 (PPSISTHSSRSSLRSSSSRSLNAQEQAPK) form a disordered region. Residue Ser-152 is modified to Phosphoserine. The SAC domain occupies 167 to 507 (LRKLLSNGSF…GDQISQIYTG (341 aa)). Ser-522 is subject to Phosphoserine. A compositionally biased stretch (low complexity) spans 955-968 (SPLLSGPSPQPSVV). Residues 955–1183 (SPLLSGPSPQ…VHPLKPCDPN (229 aa)) form a disordered region. 2 positions are modified to phosphoserine: Ser-1005 and Ser-1016. The residue at position 1032 (Thr-1032) is a Phosphothreonine. Composition is skewed to polar residues over residues 1046 to 1057 (KPVSLQKSSSEL), 1082 to 1100 (STAP…VSTT), and 1130 to 1145 (KLNT…SPSN). Ser-1095 bears the Phosphoserine mark.

This sequence belongs to the synaptojanin family. In the central section; belongs to the inositol 1,4,5-trisphosphate 5-phosphatase family. Interacts (via SAC domain) with BSP1; the interaction is direct. Interacts with ABP1.

It localises to the cytoplasm. The protein localises to the cytoskeleton. It is found in the actin patch. It catalyses the reaction a 1,2-diacyl-sn-glycero-3-phospho-(1D-myo-inositol-4,5-bisphosphate) + H2O = a 1,2-diacyl-sn-glycero-3-phospho-(1D-myo-inositol 4-phosphate) + phosphate. Functionally, dephosphorylates a number of phosphatidylinositols (PIs) like phosphatidylinositol 4,5-bisphosphate (PtdIns(4,5)P2), but also phosphatidylinositol 3-phosphate (PtdIns(3)P), phosphatidylinositol 4-phosphate (PtdIns(4)P), and phosphatidylinositol 3,5-bisphosphate (PtdIns(3,5)P2). Controls the cellular levels and subcellular distribution of phosphatidylinositol 3-phosphate and phosphatidylinositol 4,5-bisphosphate. Specifically functions within the early endocytic pathway and actin organization. In Saccharomyces cerevisiae (strain ATCC 204508 / S288c) (Baker's yeast), this protein is Polyphosphatidylinositol phosphatase INP52.